The sequence spans 156 residues: S-ribosylhomocysteine lyase (156 aa).

Fe cation-binding residues include His-56, His-60, and Cys-123.

This sequence belongs to the LuxS family. Homodimer. Fe cation is required as a cofactor.

The catalysed reaction is S-(5-deoxy-D-ribos-5-yl)-L-homocysteine = (S)-4,5-dihydroxypentane-2,3-dione + L-homocysteine. Its function is as follows. Involved in the synthesis of autoinducer 2 (AI-2) which is secreted by bacteria and is used to communicate both the cell density and the metabolic potential of the environment. The regulation of gene expression in response to changes in cell density is called quorum sensing. Catalyzes the transformation of S-ribosylhomocysteine (RHC) to homocysteine (HC) and 4,5-dihydroxy-2,3-pentadione (DPD). This is S-ribosylhomocysteine lyase from Staphylococcus epidermidis (strain ATCC 35984 / DSM 28319 / BCRC 17069 / CCUG 31568 / BM 3577 / RP62A).